The chain runs to 148 residues: Deoxyuridine 5'-triphosphate nucleotidohydrolase (148 aa).

Substrate-binding positions include arginine 67–glycine 69, asparagine 80, leucine 84–aspartate 86, and methionine 94.

It belongs to the dUTPase family. Mg(2+) serves as cofactor.

The enzyme catalyses dUTP + H2O = dUMP + diphosphate + H(+). Its pathway is pyrimidine metabolism; dUMP biosynthesis; dUMP from dCTP (dUTP route): step 2/2. Its function is as follows. This enzyme is involved in nucleotide metabolism: it produces dUMP, the immediate precursor of thymidine nucleotides and it decreases the intracellular concentration of dUTP so that uracil cannot be incorporated into DNA. The protein is Deoxyuridine 5'-triphosphate nucleotidohydrolase of Paraburkholderia phymatum (strain DSM 17167 / CIP 108236 / LMG 21445 / STM815) (Burkholderia phymatum).